Reading from the N-terminus, the 302-residue chain is Mitochondrial glycine transporter (302 aa).

Solcar repeat units follow at residues His-22 to His-112, Pro-119 to Leu-203, and Phe-213 to Lys-297. Helical transmembrane passes span Phe-28–Gln-53, Gly-87–Phe-113, Val-125–Glu-150, Gly-178–Lys-201, Leu-217–Ile-243, and Gly-272–Val-290.

It belongs to the mitochondrial carrier (TC 2.A.29) family. SLC25A38 subfamily.

The protein resides in the mitochondrion inner membrane. The catalysed reaction is glycine(in) = glycine(out). In terms of biological role, mitochondrial glycine transporter that imports glycine into the mitochondrial matrix. Plays an important role in providing glycine for the first enzymatic step in heme biosynthesis, the condensation of glycine with succinyl-CoA to produce 5-aminolevulinate (ALA) in the mitochondrial matrix. Required during erythropoiesis. Functionally, may play a role as pro-apoptotic protein that induces caspase-dependent apoptosis. The polypeptide is Mitochondrial glycine transporter (Xenopus tropicalis (Western clawed frog)).